A 244-amino-acid polypeptide reads, in one-letter code: MDVKIDILTLFPEMFHVFNYSIIGRAIEKNILSINTFNIRNFTENKHRKVDDYPYGGGSGMIMTAQPIVDCINSVKTQNKGNVVYLGPRGKIFDQSMAKKLSSEKELIFLCGHYEGIDERVYRYIDLEISIGDFIVTGGEMACIPIVDSICRMIPGVLSSTESYTEESFYNGVLEYPQYTRPEFFRGDRVPEVLISGHHENIRKWRRAKSFILTKNKRPDLFERIELSKEDRELIKLYENGYTD.

S-adenosyl-L-methionine contacts are provided by residues Gly112 and 131 to 136 (IGDFIV).

The protein belongs to the RNA methyltransferase TrmD family. Homodimer.

It localises to the cytoplasm. The enzyme catalyses guanosine(37) in tRNA + S-adenosyl-L-methionine = N(1)-methylguanosine(37) in tRNA + S-adenosyl-L-homocysteine + H(+). Functionally, specifically methylates guanosine-37 in various tRNAs. The protein is tRNA (guanine-N(1)-)-methyltransferase of Clostridium kluyveri (strain NBRC 12016).